Here is a 214-residue protein sequence, read N- to C-terminus: tRNA (guanine-N(7)-)-methyltransferase (214 aa).

S-adenosyl-L-methionine is bound by residues Glu-43, Glu-68, Asp-95, and Asp-117. Asp-117 is an active-site residue. Residues Lys-121, Asp-153, and 191-194 (TEYE) contribute to the substrate site.

It belongs to the class I-like SAM-binding methyltransferase superfamily. TrmB family.

It carries out the reaction guanosine(46) in tRNA + S-adenosyl-L-methionine = N(7)-methylguanosine(46) in tRNA + S-adenosyl-L-homocysteine. It participates in tRNA modification; N(7)-methylguanine-tRNA biosynthesis. Catalyzes the formation of N(7)-methylguanine at position 46 (m7G46) in tRNA. The polypeptide is tRNA (guanine-N(7)-)-methyltransferase (Lachnoclostridium phytofermentans (strain ATCC 700394 / DSM 18823 / ISDg) (Clostridium phytofermentans)).